A 253-amino-acid polypeptide reads, in one-letter code: 23S rRNA (cytidine-2'-O)-methyltransferase TlyA (253 aa).

The S4 RNA-binding domain occupies 1–73 (MRFDFFVSKR…LKLDLLSEIY (73 aa)).

This sequence belongs to the TlyA family.

The catalysed reaction is cytidine(1920) in 23S rRNA + S-adenosyl-L-methionine = 2'-O-methylcytidine(1920) in 23S rRNA + S-adenosyl-L-homocysteine + H(+). Functionally, catalyzes the 2'-O-methylation at nucleotide C1920 in 23S rRNA. Enhances motility. Enhances biofilm formation. Involved in the assembly of 70S ribosomes. Involved in virulence by promoting adherence and invasion to host cells. Involved in pathogenicity by modulating secretion of host-protective chemokine interleukin 8 (IL-8). Involved in susceptibility to antibiotic capreomycin. The chain is 23S rRNA (cytidine-2'-O)-methyltransferase TlyA from Campylobacter jejuni subsp. jejuni serotype O:23/36 (strain 81-176).